A 158-amino-acid chain; its full sequence is Auxin-responsive protein IAA31 (158 aa).

Residues 1–40 show a composition bias toward low complexity; it reads MEVSNSCSSFSSSSVDSTKPSPSESSVNLSLSLTFPSTSP. The disordered stretch occupies residues 1 to 49; sequence MEVSNSCSSFSSSSVDSTKPSPSESSVNLSLSLTFPSTSPQREARQDWP. The EAR-like (transcriptional repression) motif lies at 29–33; sequence LSLSL. Residues 72-157 form the PB1 domain; sequence SLFVKVYMEG…RRLKITRPER (86 aa).

This sequence belongs to the Aux/IAA family. Homodimers and heterodimers.

It is found in the nucleus. Its function is as follows. Aux/IAA proteins are short-lived transcriptional factors that function as repressors of early auxin response genes at low auxin concentrations. Repression is thought to result from the interaction with auxin response factors (ARFs), proteins that bind to the auxin-responsive promoter element (AuxRE). Formation of heterodimers with ARF proteins may alter their ability to modulate early auxin response genes expression. The polypeptide is Auxin-responsive protein IAA31 (IAA31) (Arabidopsis thaliana (Mouse-ear cress)).